The following is a 252-amino-acid chain: Ribosomal RNA small subunit methyltransferase J (252 aa).

Residues R105–D106, E121–R122, and D175 contribute to the S-adenosyl-L-methionine site.

It belongs to the methyltransferase superfamily. RsmJ family.

The protein localises to the cytoplasm. It catalyses the reaction guanosine(1516) in 16S rRNA + S-adenosyl-L-methionine = N(2)-methylguanosine(1516) in 16S rRNA + S-adenosyl-L-homocysteine + H(+). Specifically methylates the guanosine in position 1516 of 16S rRNA. This chain is Ribosomal RNA small subunit methyltransferase J, found in Pasteurella multocida (strain Pm70).